An 895-amino-acid polypeptide reads, in one-letter code: ABC-transporter-regulating transcription factor (895 aa).

The segment at residues 69 to 96 is a DNA-binding region (zn(2)-C6 fungal-type); it reads CDMCRKKKIKCDGKMPKCSHCTNYKTDC. The segment at 156 to 218 is disordered; it reads HASGSNTPHN…QKESETEVEG (63 aa). Residues 158–207 are compositionally biased toward polar residues; it reads SGSNTPHNPQKINIPSQSQIAMSQQNSSSHYSTPRLESQSSPRTAATSPE. Residues 648–668 form a helical membrane-spanning segment; the sequence is CVWLILYYPVSALVTLFANIL. Residues 726–813 form a disordered region; that stretch reads ESYSKKKRKS…TGVSTNIPPN (88 aa). Residues 755-765 show a composition bias toward low complexity; the sequence is PSTTQPTQAPS.

In terms of assembly, interacts with ncaA.

The protein localises to the nucleus. The protein resides in the membrane. Its function is as follows. Transcription factor that regulates expression of the genes related to ergosterol biosynthesis, including erg3B, erg24A, erg25A, as well as cyp51A that encodes a target protein of azoles. In coordination with ffmA and ncaA, is responsible for the expression of the ABC transporter abcC/cdr1B/abcG1 related to azole resistance. Directly binds both the cyp51A and abcC/cdr1B/abcG1 promoters at a conserved 34 bp region called the atrR response element (ATRE). AtrR also binds to the promoter regions of both the sterol response transcription factor srbA and atrR genes themselves, the latter suggesting the possibility that atrR is autoregulated. Also regulates iron uptake, most likely via cooperation with SrbA. AtrR is necessary for hypoxia adaptation and virulence. This Aspergillus fumigatus (strain ATCC MYA-4609 / CBS 101355 / FGSC A1100 / Af293) (Neosartorya fumigata) protein is ABC-transporter-regulating transcription factor.